A 257-amino-acid polypeptide reads, in one-letter code: DNA repair protein RecO (257 aa).

Belongs to the RecO family.

Its function is as follows. Involved in DNA repair and RecF pathway recombination. The protein is DNA repair protein RecO of Synechococcus sp. (strain CC9605).